A 780-amino-acid polypeptide reads, in one-letter code: Protein phosphatase 1 regulatory subunit 21 (780 aa).

Coiled-coil stretches lie at residues 1–207 (MASA…LKTL) and 556–607 (ESRE…LKNT). The tract at residues 84–104 (EPRGKKNKKSGESSSQLSQEQ) is disordered. Positions 95–104 (ESSSQLSQEQ) are enriched in low complexity. Phosphothreonine is present on Thr-652. Positions 693 to 742 (YAECRALSKRLALAEKSKEALTEEMKLASQNISRLQDELTTTKRSYEDQL) form a coiled coil. Residues 760–780 (REEIDTLKMSSKGNSKKNKSR) form a disordered region.

As to quaternary structure, component of the FERRY complex, composed of five subunits: TBCK, PPP1R21, FERRY3, CRYZL1 and GATAD1, with a ratio of 1:2:1:2:4 respectively. PPP1R21 serves as a binding hub connecting all five complex subunits to mediate the binding to specific mitochondrial mRNAs. Interacts with the GTP-bound form of RAB5A (via its C-terminal region); linking the mRNP complex onto trafficking endosomes for active mRNA transport. Interacts with PPP1CA.

It is found in the early endosome. Functionally, component of the FERRY complex (Five-subunit Endosomal Rab5 and RNA/ribosome intermediary). The FERRY complex directly interacts with mRNAs and RAB5A, and functions as a RAB5A effector involved in the localization and the distribution of specific mRNAs most likely by mediating their endosomal transport. The complex recruits mRNAs and ribosomes to early endosomes through direct mRNA-interaction. In the complex, PPP1R21 serves as a binding hub connecting all five complex subunits and mediating the binding to mRNA and early endosomes via RAB5A. Putative regulator of protein phosphatase 1 (PP1) activity. May play a role in the endosomal sorting process or in endosome maturation pathway. The polypeptide is Protein phosphatase 1 regulatory subunit 21 (PPP1R21) (Homo sapiens (Human)).